We begin with the raw amino-acid sequence, 438 residues long: Protein DAY-LENGTH-DEPENDENT DELAYED-GREENING 1, chloroplastic (438 aa).

The transit peptide at 1-54 (MSLMSSSMVLCHCLSFSSQNPDPESSSSSLLRYKPCDSISLWGKRRKKLWRFVP) directs the protein to the chloroplast. Transmembrane regions (helical) follow at residues 216 to 236 (FLAVLILIPWALDFLAHDYLL), 314 to 334 (AFANIWSDMVFGISLFVLLYA), 359 to 379 (AFLIILITDIFLGYHSESGWE), and 398 to 418 (ITIFICLVPVIMDACVKLWLF).

It belongs to the CemA family.

The protein resides in the plastid. It is found in the chloroplast envelope. Its subcellular location is the chloroplast membrane. The enzyme catalyses K(+)(in) + H(+)(out) = K(+)(out) + H(+)(in). It catalyses the reaction Ca(2+)(in) + H(+)(out) = Ca(2+)(out) + H(+)(in). Promotes K(+)/H(+) antiport activity supporting K(+) efflux to control H(+) homeostasis in chloroplasts. Also able to ensure Ca(2+)/H(+) antiport activity in vitro. Essential for chloroplast pH regulation and optimization of non-photochemical quenching (NPQ), a regulatory mechanism that dissipates excess light energy; acts downstream of PSBS but independently from PGR5 and FLAP1. The protein is Protein DAY-LENGTH-DEPENDENT DELAYED-GREENING 1, chloroplastic of Arabidopsis thaliana (Mouse-ear cress).